Reading from the N-terminus, the 397-residue chain is Formate-dependent phosphoribosylglycinamide formyltransferase (397 aa).

Residues 21–22 (EL) and E81 each bind N(1)-(5-phospho-beta-D-ribosyl)glycinamide. ATP contacts are provided by residues R113, K154, 194–197 (EEFV), and E202. The ATP-grasp domain maps to 118–312 (RFAAEKLKLP…EFQIHVRSAI (195 aa)). Mg(2+) is bound by residues E271 and E283. Residues D290, K361, and 368–369 (RR) contribute to the N(1)-(5-phospho-beta-D-ribosyl)glycinamide site.

It belongs to the PurK/PurT family. In terms of assembly, homodimer.

The enzyme catalyses N(1)-(5-phospho-beta-D-ribosyl)glycinamide + formate + ATP = N(2)-formyl-N(1)-(5-phospho-beta-D-ribosyl)glycinamide + ADP + phosphate + H(+). It participates in purine metabolism; IMP biosynthesis via de novo pathway; N(2)-formyl-N(1)-(5-phospho-D-ribosyl)glycinamide from N(1)-(5-phospho-D-ribosyl)glycinamide (formate route): step 1/1. Its function is as follows. Involved in the de novo purine biosynthesis. Catalyzes the transfer of formate to 5-phospho-ribosyl-glycinamide (GAR), producing 5-phospho-ribosyl-N-formylglycinamide (FGAR). Formate is provided by PurU via hydrolysis of 10-formyl-tetrahydrofolate. This is Formate-dependent phosphoribosylglycinamide formyltransferase from Saccharolobus solfataricus (strain ATCC 35092 / DSM 1617 / JCM 11322 / P2) (Sulfolobus solfataricus).